We begin with the raw amino-acid sequence, 358 residues long: UDP-N-acetylglucosamine--N-acetylmuramyl-(pentapeptide) pyrophosphoryl-undecaprenol N-acetylglucosamine transferase (358 aa).

Residues 11 to 13 (TGG), N120, R161, S188, and Q282 contribute to the UDP-N-acetyl-alpha-D-glucosamine site.

This sequence belongs to the glycosyltransferase 28 family. MurG subfamily.

The protein resides in the cell inner membrane. The catalysed reaction is di-trans,octa-cis-undecaprenyl diphospho-N-acetyl-alpha-D-muramoyl-L-alanyl-D-glutamyl-meso-2,6-diaminopimeloyl-D-alanyl-D-alanine + UDP-N-acetyl-alpha-D-glucosamine = di-trans,octa-cis-undecaprenyl diphospho-[N-acetyl-alpha-D-glucosaminyl-(1-&gt;4)]-N-acetyl-alpha-D-muramoyl-L-alanyl-D-glutamyl-meso-2,6-diaminopimeloyl-D-alanyl-D-alanine + UDP + H(+). Its pathway is cell wall biogenesis; peptidoglycan biosynthesis. Functionally, cell wall formation. Catalyzes the transfer of a GlcNAc subunit on undecaprenyl-pyrophosphoryl-MurNAc-pentapeptide (lipid intermediate I) to form undecaprenyl-pyrophosphoryl-MurNAc-(pentapeptide)GlcNAc (lipid intermediate II). The chain is UDP-N-acetylglucosamine--N-acetylmuramyl-(pentapeptide) pyrophosphoryl-undecaprenol N-acetylglucosamine transferase from Synechococcus sp. (strain CC9902).